We begin with the raw amino-acid sequence, 340 residues long: Ketol-acid reductoisomerase (NADP(+)) (340 aa).

The 182-residue stretch at 1 to 182 (MRVYYDRDCD…GGGRSGIIET (182 aa)) folds into the KARI N-terminal Rossmann domain. NADP(+)-binding positions include 24 to 27 (YGSQ), Arg-48, Ser-51, Ser-53, and 83 to 86 (DELQ). The active site involves His-108. Gly-134 provides a ligand contact to NADP(+). One can recognise a KARI C-terminal knotted domain in the interval 183 to 329 (NFRQECETDL…EKLRGMMPWI (147 aa)). The Mg(2+) site is built by Asp-191, Glu-195, Glu-227, and Glu-231. Ser-252 contributes to the substrate binding site.

This sequence belongs to the ketol-acid reductoisomerase family. It depends on Mg(2+) as a cofactor.

It catalyses the reaction (2R)-2,3-dihydroxy-3-methylbutanoate + NADP(+) = (2S)-2-acetolactate + NADPH + H(+). The catalysed reaction is (2R,3R)-2,3-dihydroxy-3-methylpentanoate + NADP(+) = (S)-2-ethyl-2-hydroxy-3-oxobutanoate + NADPH + H(+). The protein operates within amino-acid biosynthesis; L-isoleucine biosynthesis; L-isoleucine from 2-oxobutanoate: step 2/4. It functions in the pathway amino-acid biosynthesis; L-valine biosynthesis; L-valine from pyruvate: step 2/4. Functionally, involved in the biosynthesis of branched-chain amino acids (BCAA). Catalyzes an alkyl-migration followed by a ketol-acid reduction of (S)-2-acetolactate (S2AL) to yield (R)-2,3-dihydroxy-isovalerate. In the isomerase reaction, S2AL is rearranged via a Mg-dependent methyl migration to produce 3-hydroxy-3-methyl-2-ketobutyrate (HMKB). In the reductase reaction, this 2-ketoacid undergoes a metal-dependent reduction by NADPH to yield (R)-2,3-dihydroxy-isovalerate. This Cereibacter sphaeroides (strain ATCC 17023 / DSM 158 / JCM 6121 / CCUG 31486 / LMG 2827 / NBRC 12203 / NCIMB 8253 / ATH 2.4.1.) (Rhodobacter sphaeroides) protein is Ketol-acid reductoisomerase (NADP(+)).